Reading from the N-terminus, the 112-residue chain is 2Fe-2S ferredoxin (112 aa).

Residues 1–104 (MPQIVILPHA…DLVVEIPKYT (104 aa)) enclose the 2Fe-2S ferredoxin-type domain. [2Fe-2S] cluster contacts are provided by Cys-42, Cys-48, Cys-51, and Cys-87.

It belongs to the adrenodoxin/putidaredoxin family. The cofactor is [2Fe-2S] cluster.

In terms of biological role, ferredoxin are iron-sulfur proteins that transfer electrons in a wide variety of metabolic reactions. This is 2Fe-2S ferredoxin (fdx) from Pseudomonas aeruginosa (strain ATCC 15692 / DSM 22644 / CIP 104116 / JCM 14847 / LMG 12228 / 1C / PRS 101 / PAO1).